The primary structure comprises 569 residues: Glutamine--tRNA ligase (569 aa).

The interval 1–23 is disordered; the sequence is MSKDPMSKPTPEPAAHSKAGPAV. The 'HIGH' region signature appears at 50–60; sequence PEPNGYLHIGH. ATP-binding positions include 51 to 53 and 57 to 63; these read EPN and HIGHAKS. 2 residues coordinate L-glutamine: Asp-83 and Tyr-228. Residues Thr-247 and 277-278 each bind ATP; that span reads RL. Residues 284 to 288 carry the 'KMSKS' region motif; the sequence is ITSKR.

This sequence belongs to the class-I aminoacyl-tRNA synthetase family. In terms of assembly, monomer.

Its subcellular location is the cytoplasm. The enzyme catalyses tRNA(Gln) + L-glutamine + ATP = L-glutaminyl-tRNA(Gln) + AMP + diphosphate. In Pseudomonas syringae pv. tomato (strain ATCC BAA-871 / DC3000), this protein is Glutamine--tRNA ligase.